We begin with the raw amino-acid sequence, 252 residues long: 5-oxoprolinase subunit A (252 aa).

Belongs to the LamB/PxpA family. In terms of assembly, forms a complex composed of PxpA, PxpB and PxpC.

The catalysed reaction is 5-oxo-L-proline + ATP + 2 H2O = L-glutamate + ADP + phosphate + H(+). In terms of biological role, catalyzes the cleavage of 5-oxoproline to form L-glutamate coupled to the hydrolysis of ATP to ADP and inorganic phosphate. The protein is 5-oxoprolinase subunit A of Staphylococcus saprophyticus subsp. saprophyticus (strain ATCC 15305 / DSM 20229 / NCIMB 8711 / NCTC 7292 / S-41).